The following is a 460-amino-acid chain: CUGBP Elav-like family member 6 (460 aa).

Positions 1–10 (MAAAPGGSAP) are enriched in low complexity. The segment at 1-37 (MAAAPGGSAPPAGPSPRLAFSTADSGGGMSGLNPGPA) is disordered. RRM domains lie at 46–127 (IKLF…PAAS) and 134–214 (RKLF…LADT). The interval 316-336 (NGFGSLTPQSNGQPGSDTLYN) is disordered. Positions 319–336 (GSLTPQSNGQPGSDTLYN) are enriched in polar residues. The 79-residue stretch at 375 to 453 (CNLFIYHLPQ…KRLKVQLKRP (79 aa)) folds into the RRM 3 domain.

The protein belongs to the CELF/BRUNOL family.

It localises to the nucleus. It is found in the cytoplasm. Functionally, RNA-binding protein implicated in the regulation of pre-mRNA alternative splicing. Mediates exon inclusion and/or exclusion in pre-mRNA that are subject to tissue-specific and developmentally regulated alternative splicing. Specifically activates exon 5 inclusion of TNNT2 in a muscle-specific splicing enhancer (MSE)-dependent manner. Promotes also exon exclusion of INSR pre-mRNA. The chain is CUGBP Elav-like family member 6 (Celf6) from Mus musculus (Mouse).